The primary structure comprises 506 residues: MFVLIYLLIAISSLLAYLYHRNFNYWNRRGVPHDAPHPLYGNMVGFRKNRVMHDFFYDYYNKYRKSGFPFVGFYFLHKPAAFIVDTQLAKNILIKDFSNFADRGQFHNGRDDPLTQHLFNLDGKKWKDMRQRLTPTFTSGKMKFMFPTVIKVSEEFVKVITEQVPAAQNGAVLEIKELMARFTTDVIGTCAFGIECNTLRTPVSDFRTMGQKVFTDMRHGKLLTMFVFSFPKLASRLRMRMMPEDVHQFFMRLVNDTIALRERENFKRNDFMNLLIELKQKGRVTLDNGEVIEGMDIGELAAQVFVFYVAGFETSSSTMSYCLYELAQNQDIQDRLRNEIQTVLEEQEGQLTYESIKAMTYLNQVISETLRLYTLVPHLERKALNDYVVPGHEKLVIEKGTQVIIPACAYHRDEDLYPNPETFDPERFSPEKVAARESVEWLPFGDGPRNCIGMRFGQMQARIGLAQIISRFRVSVCDTTEIPLKYSPMSIVLGTVGGIYLRVERI.

Cys451 serves as a coordination point for heme.

This sequence belongs to the cytochrome P450 family. Requires heme as cofactor.

The protein localises to the endoplasmic reticulum membrane. Its subcellular location is the microsome membrane. Its function is as follows. Is involved in the breakdown of synthetic insecticides and may be involved in the metabolism of insect hormones. In Drosophila melanogaster (Fruit fly), this protein is Cytochrome P450 6a2 (Cyp6a2).